Consider the following 707-residue polypeptide: Caprin-1 (707 aa).

2 stretches are compositionally biased toward low complexity: residues 1 to 15 and 22 to 43; these read MPSA…SKSS and GSSG…PATG. The interval 1-48 is disordered; the sequence is MPSATSHSGSGSKSSGPPPPSGSSGSEAAAGAAAPASQHPATGTGAVQ. Position 2 is an N-acetylproline (proline 2). Phosphoserine is present on serine 10. Residues 58 to 92 are a coiled coil; it reads VIDKKLRNLEKKKGKLDDYQERMNKGERLNQDQLD. Phosphoserine is present on serine 113. A coiled-coil region spans residues 123-151; that stretch reads KTIKKTARREQLMREEAEQKRLKTVLELQ. Residue arginine 163 is modified to Omega-N-methylarginine. A disordered region spans residues 325 to 347; sequence LQQQPQAASPSVPEPHSLTPVAQ. The segment covering 326–335 has biased composition (low complexity); the sequence is QQQPQAASPS. Residues serine 333 and serine 341 each carry the phosphoserine modification. The segment at 358–379 is G3BP1-binding; the sequence is QDLMAQMQGPYNFIQDSMLDFE. Disordered stretches follow at residues 412 to 443, 523 to 558, and 570 to 620; these read ESRL…YTAS, PVPP…EQTE, and TYHG…RGLM. Polar residues predominate over residues 431 to 443; sequence PLVSSTSEGYTAS. A compositionally biased stretch (low complexity) spans 535–558; the sequence is QQSQYQASYNQSFSSQPHQVEQTE. Over residues 572–603 the composition is skewed to polar residues; that stretch reads HGSQDQPHQVPGNHQQPPQQSTGFPRSSQPYY. Tyrosine 623 carries the post-translational modification Phosphotyrosine. Omega-N-methylarginine is present on residues arginine 624 and arginine 631. Tyrosine 634 and tyrosine 637 each carry phosphotyrosine. Arginine 638 carries the omega-N-methylarginine modification. Residues 641–655 are compositionally biased toward polar residues; the sequence is FSNTPNSGYTQSQFN. Residues 641 to 707 are disordered; that stretch reads FSNTPNSGYT…MPQMNTQQVN (67 aa). O-linked (GlcNAc) serine glycosylation is found at serine 642 and serine 647. Phosphotyrosine is present on residues tyrosine 649, tyrosine 660, tyrosine 663, and tyrosine 668. 2 stretches are compositionally biased toward low complexity: residues 674 to 684 and 695 to 707; these read RGSGQSGPRGA and NRGM…QQVN. Residue arginine 696 is modified to Asymmetric dimethylarginine; alternate. An Omega-N-methylarginine; alternate modification is found at arginine 696.

Belongs to the caprin family. As to quaternary structure, may form homomultimers. Interacts with G3BP1; interaction is direct and promotes stress granule formation. Interacts with G3BP2; interaction is direct and promotes stress granule formation. Interacts with PQBP1. Interacts with DDX3X. Interacts (when phosphorylated by EPHA4) with FMR1; interaction with FMR1 promotes formation of a membraneless compartment. In terms of processing, tyrosine phosphorylation by EPHA4 promotes interaction with FMR1 and liquid-liquid phase separation (LLPS) for the formation of a membraneless compartment that concentrates mRNAs with associated regulatory factors. Post-translationally, O-glycosylated (O-GlcNAcylated), in a cell cycle-dependent manner. O-glycosylation by OGT inhibit ability to undergo liquid-liquid phase separation (LLPS). Expressed in hippocampal and neocortical pyramidal neurons, but not in Purkinje cells.

The protein resides in the cytoplasm. It localises to the cytoplasmic ribonucleoprotein granule. It is found in the cytosol. The protein localises to the cell projection. Its subcellular location is the dendrite. The protein resides in the lamellipodium. Its activity is regulated as follows. Ability to mediate liquid-liquid phase separation is regulated by ATP: moderate concentrations of ATP enhance phase separation, whereas high concentrations of ATP lead to inhibition of phase separation. MRNA-binding protein that acts as a regulator of mRNAs transport, translation and/or stability, and which is involved in neurogenesis, synaptic plasticity in neurons and cell proliferation and migration in multiple cell types. Plays an essential role in cytoplasmic stress granule formation. Acts as an mRNA regulator by mediating formation of some phase-separated membraneless compartment: undergoes liquid-liquid phase separation upon binding to target mRNAs, leading to assemble mRNAs into cytoplasmic ribonucleoprotein granules that concentrate mRNAs with associated regulatory factors. Undergoes liquid-liquid phase separation following phosphorylation and interaction with FMR1, promoting formation of cytoplasmic ribonucleoprotein granules that concentrate mRNAs with factors that inhibit translation and mediate deadenylation of target mRNAs. In these cytoplasmic ribonucleoprotein granules, CAPRIN1 mediates recruitment of CNOT7 deadenylase, leading to mRNA deadenylation and degradation. Binds directly and selectively to MYC and CCND2 mRNAs. In neuronal cells, directly binds to several mRNAs associated with RNA granules, including BDNF, CAMK2A, CREB1, MAP2, NTRK2 mRNAs, as well as to GRIN1 and KPNB1 mRNAs, but not to rRNAs. This chain is Caprin-1 (Caprin1), found in Rattus norvegicus (Rat).